The chain runs to 310 residues: ADP-L-glycero-D-manno-heptose-6-epimerase (310 aa).

Residues 10-11 (FI), 31-32 (DN), Lys38, Lys53, 75-79 (EGACS), and Asn92 each bind NADP(+). The active-site Proton acceptor is Tyr140. Lys144 provides a ligand contact to NADP(+). Asn169 is a substrate binding site. NADP(+)-binding residues include Val170 and Lys178. Lys178 functions as the Proton acceptor in the catalytic mechanism. Substrate is bound by residues Ser180, His187, 201–204 (FEGS), Arg209, and Tyr272.

The protein belongs to the NAD(P)-dependent epimerase/dehydratase family. HldD subfamily. Homopentamer. It depends on NADP(+) as a cofactor.

It catalyses the reaction ADP-D-glycero-beta-D-manno-heptose = ADP-L-glycero-beta-D-manno-heptose. It functions in the pathway nucleotide-sugar biosynthesis; ADP-L-glycero-beta-D-manno-heptose biosynthesis; ADP-L-glycero-beta-D-manno-heptose from D-glycero-beta-D-manno-heptose 7-phosphate: step 4/4. Functionally, catalyzes the interconversion between ADP-D-glycero-beta-D-manno-heptose and ADP-L-glycero-beta-D-manno-heptose via an epimerization at carbon 6 of the heptose. The chain is ADP-L-glycero-D-manno-heptose-6-epimerase from Citrobacter koseri (strain ATCC BAA-895 / CDC 4225-83 / SGSC4696).